Here is a 1450-residue protein sequence, read N- to C-terminus: ABC transporter G family member 37 (1450 aa).

The region spanning 175–447 (VKLTGAKTHE…FEDCGFRCPE (273 aa)) is the ABC transporter 1 domain. 207–214 (GPPSCGKT) lines the ATP pocket. The 213-residue stretch at 525–737 (ELFIACISRE…GEIGLSVNEF (213 aa)) folds into the ABC transmembrane type-2 1 domain. Helical transmembrane passes span 544–564 (VYIFKTAQLVMAAFITMTVFI), 581–601 (ALFFALIILLVDGFPELSMTA), 615–635 (FYPAWAYAIPATVLKVPLSFF), 661–681 (FILLFAVHFTSISMFRCLAAI), 687–707 (ASITAGSFGILFTFVFAGFVI), and 773–793 (LCALLGFTVLFNIIFTLALTF). Residues 810 to 838 (SELQGTEKSTEDSSVRKKTTDSPVKTEEE) form a disordered region. Basic and acidic residues predominate over residues 817 to 838 (KSTEDSSVRKKTTDSPVKTEEE). An ABC transporter 2 domain is found at 850 to 1103 (VTFQDLNYFV…IIEYFESVPE (254 aa)). 895-902 (GVSGAGKT) contacts ATP. Positions 1175–1389 (GQFKSILWKM…TLNGFISSQY (215 aa)) constitute an ABC transmembrane type-2 2 domain. 7 helical membrane passes run 1194–1214 (YNLMRMMHTLVSSLIFGALFW), 1226–1246 (MFTVFGAIYGLVLFLGINNCA), 1282–1302 (IPYIFIQAAEFVIVTYPMIGF), 1313–1333 (LYSMFCSLLTFNYLAMFLVSI), 1339–1359 (VAAILQSLFYVGFNLFSGFLI), 1365–1385 (PGWWIWLYYLTPTSWTLNGFI), and 1422–1442 (VTAVVQIAFPIALASMFAFFV).

This sequence belongs to the ABC transporter superfamily. ABCG family. PDR (TC 3.A.1.205) subfamily. In terms of tissue distribution, expressed in roots and, to a lower extent, in seedlings.

The protein localises to the cell membrane. Its function is as follows. Together with ABCG36, regulates auxin homeostasis and responses by playing a dual role in coumarin (and derivatives) and in the auxin precursor indole 3-butyric acid (IBA) efflux transport, thus influencing roots and root hairs development. Mediates coumarin exudation in the rhizosphere, especially in iron (Fe) deficient conditions, with a strong specificity for highly oxygenated compounds such as scopoletin and derivatives, dihydroxyscopoletin, esculetin, fraxin, fraxetin and esculin; these molecules improve plant Fe nutrition. Involved in the cellular detoxification of xenobiotics by promoting the excretion of some auxinic herbicides including 2,4-dichlorophenoxyacetic acid (2,4-D), 4-(2,4-dichlorophenoxy)butyric acid (2,4-DB) and other members of the phenoxyalkanoic acid family as well as the polar auxin transport inhibitor, napthylphthalamic acid (NPA). May be a general defense protein. This Arabidopsis thaliana (Mouse-ear cress) protein is ABC transporter G family member 37.